The primary structure comprises 253 residues: MLLDDQLKYWVLLPISIVMVLTGVLKQYIMTLITGSSANEAQPRVKLTEWQYLQWAQLLIGNGGNLSSDAFAAKKEFLVKDLTEERHLAKAKQQDGSQAGEVPNPFNDPSMSNAMMNMAKGNMASFIPQTIIMWWVNHFFAGFILMQLPFPLTAKFKEMLQTGIICQDLDVRWVSSISWYFISVLGLNPVYNLIGLNDQDMGIQAGIGGPQGPQGPPQSQVDKAMHAMANDLTIIQHETCLDNVEQRVLKQYM.

A run of 3 helical transmembrane segments spans residues 10–30 (WVLL…QYIM), 126–146 (FIPQ…FILM), and 176–196 (SISW…LIGL).

It belongs to the EMC3 family. In terms of assembly, component of the ER membrane protein complex (EMC), which is composed of EMC1, EMC2, EMC3, EMC4, EMC5 and EMC6.

The protein localises to the endoplasmic reticulum membrane. In terms of biological role, the EMC seems to be required for efficient folding of proteins in the endoplasmic reticulum (ER). This is ER membrane protein complex subunit 3 (AIM27) from Saccharomyces cerevisiae (strain YJM789) (Baker's yeast).